The following is a 459-amino-acid chain: Ribulose bisphosphate carboxylase large chain (459 aa).

Residue K4 is modified to N6,N6,N6-trimethyllysine. Positions 113 and 163 each coordinate substrate. Residue K165 is the Proton acceptor of the active site. Residue K167 participates in substrate binding. Mg(2+) is bound by residues K191, D193, and E194. N6-carboxylysine is present on K191. The active-site Proton acceptor is the H284. The substrate site is built by R285, H317, and S369.

The protein belongs to the RuBisCO large chain family. Type I subfamily. As to quaternary structure, heterohexadecamer of 8 large chains and 8 small chains; disulfide-linked. The disulfide link is formed within the large subunit homodimers. The cofactor is Mg(2+). In terms of processing, the disulfide bond which can form in the large chain dimeric partners within the hexadecamer appears to be associated with oxidative stress and protein turnover.

The protein resides in the plastid. It localises to the chloroplast. The enzyme catalyses 2 (2R)-3-phosphoglycerate + 2 H(+) = D-ribulose 1,5-bisphosphate + CO2 + H2O. It carries out the reaction D-ribulose 1,5-bisphosphate + O2 = 2-phosphoglycolate + (2R)-3-phosphoglycerate + 2 H(+). RuBisCO catalyzes two reactions: the carboxylation of D-ribulose 1,5-bisphosphate, the primary event in carbon dioxide fixation, as well as the oxidative fragmentation of the pentose substrate in the photorespiration process. Both reactions occur simultaneously and in competition at the same active site. The sequence is that of Ribulose bisphosphate carboxylase large chain from Parnassia fimbriata (Fringed grass-of-Parnassus).